The following is a 421-amino-acid chain: Gamma-glutamyl phosphate reductase (421 aa).

The protein belongs to the gamma-glutamyl phosphate reductase family.

The protein localises to the cytoplasm. The enzyme catalyses L-glutamate 5-semialdehyde + phosphate + NADP(+) = L-glutamyl 5-phosphate + NADPH + H(+). It participates in amino-acid biosynthesis; L-proline biosynthesis; L-glutamate 5-semialdehyde from L-glutamate: step 2/2. Functionally, catalyzes the NADPH-dependent reduction of L-glutamate 5-phosphate into L-glutamate 5-semialdehyde and phosphate. The product spontaneously undergoes cyclization to form 1-pyrroline-5-carboxylate. The sequence is that of Gamma-glutamyl phosphate reductase from Pseudomonas aeruginosa (strain UCBPP-PA14).